A 272-amino-acid polypeptide reads, in one-letter code: Zinc transporter ZupT (272 aa).

The next 8 helical transmembrane spans lie at 11–31, 40–60, 76–96, 126–146, 158–178, 189–209, 211–231, and 250–270; these read IALA…LMVV, LLAF…LTEI, LGFT…MVID, LMTA…TFFA, AFAI…PVYF, ASLL…LALF, VLSD…MVFL, and VYGL…FRFA. Residues Asn-136 and Glu-139 each contribute to the Fe(2+) site. Positions 139 and 164 each coordinate Zn(2+). Fe(2+)-binding residues include Asn-165, Glu-168, and Glu-197. Glu-168 contacts Zn(2+).

This sequence belongs to the ZIP transporter (TC 2.A.5) family. ZupT subfamily.

It is found in the cell inner membrane. It carries out the reaction Zn(2+)(in) = Zn(2+)(out). In terms of biological role, mediates zinc uptake. May also transport other divalent cations. This Xanthomonas axonopodis pv. citri (strain 306) protein is Zinc transporter ZupT.